A 100-amino-acid chain; its full sequence is Small ubiquitin-related modifier 1 (100 aa).

Residues 1-12 (MSAAGEEDKKPA) are compositionally biased toward basic and acidic residues. The segment at 1–23 (MSAAGEEDKKPAGGEGGGAHINL) is disordered. The 78-residue stretch at 19–96 (AHINLKVKGQ…IDAMLHQTGG (78 aa)) folds into the Ubiquitin-like domain. G96 participates in a covalent cross-link: Glycyl lysine isopeptide (Gly-Lys) (interchain with K-? in acceptor proteins).

Belongs to the ubiquitin family. SUMO subfamily. In terms of assembly, interacts with SAE2, SCE1 and SIZ1. Covalently attached to a number of proteins.

It localises to the nucleus. The protein resides in the cytoplasm. Its function is as follows. Ubiquitin-like protein which can be covalently attached to target lysines as a monomer. Does not seem to be involved in protein degradation and may function as an antagonist of ubiquitin in the degradation process. The sequence is that of Small ubiquitin-related modifier 1 (SUMO1) from Oryza sativa subsp. japonica (Rice).